The primary structure comprises 271 residues: Aquaporin-11 (271 aa).

At 1–14 (MSPLLGLRSELQDT) the chain is on the cytoplasmic side. Residues 15-35 (CTSLGLMLSVVLLMGLARVVA) traverse the membrane as a helical segment. At 36–41 (RQQLHR) the chain is on the lumenal side. Residues 42-62 (PVAHAFVLEFLATFQLCCCTH) traverse the membrane as a helical segment. Residues 63–74 (ELQLLSEQHPAH) are Cytoplasmic-facing. The helical transmembrane segment at 75 to 95 (PTWTLTLVYFFSLVHGLTLVG) threads the bilayer. Residues 96–163 (TSSNPCGVMM…ACKNPIRVDL (68 aa)) lie on the Lumenal side of the membrane. An NPC motif is present at residues 99–101 (NPC). The helical transmembrane segment at 164-184 (LKAVITEAVCSFLFHSALLHF) threads the bilayer. Over 185–194 (QEVRTKLRIH) the chain is Cytoplasmic. The chain crosses the membrane as a helical span at residues 195 to 215 (LLAALITFLVYAGGSLTGAVF). The NPA signature appears at 216-218 (NPA). Over 216-234 (NPALALSLHFMCFDEAFPQ) the chain is Lumenal. The helical transmembrane segment at 235–255 (FFIVYWLAPSLGILLMILMFS) threads the bilayer. Residues 256–271 (FFLPWLHNNHTINKKE) are Cytoplasmic-facing.

This sequence belongs to the MIP/aquaporin (TC 1.A.8) family. AQP11/AQP12 subfamily. As to quaternary structure, homodimer; disulfide-linked. Homotetramer. Can also form homomultimer. Not glycosylated. In terms of tissue distribution, detected in the sperm head and tail (at protein level). Expressed in subcutaneous adipocytes. Expressed in testis, kidney and ejaculated spermatozoa.

The protein resides in the endoplasmic reticulum membrane. The protein localises to the cytoplasmic vesicle membrane. It localises to the cell membrane. The catalysed reaction is H2O(in) = H2O(out). The enzyme catalyses glycerol(in) = glycerol(out). It catalyses the reaction H2O2(out) = H2O2(in). Channel protein that facilitates the transport of water, glycerol and hydrogen peroxide across membrane of cell or organelles guaranteeing intracellular homeostasis in several organes like liver, kidney and brain. In situation of stress, participates in endoplasmic reticulum (ER) homeostasis by regulating redox homeostasis through the transport of hydrogen peroxide across the endoplasmic reticulum membrane thereby regulating the oxidative stress through the NADPH oxidase 2 pathway. Plays a role by maintaining an environment suitable for translation or protein foldings in the ER lumen namely by participating in the PKD1 glycosylation processing resulting in regulation of PKD1 membrane trafficking thereby preventing the accumulation of unfolding protein in ER. Plays a role in the proximal tubule function by regulating its endosomal acidification. May play a role in postnatal kidney development. The sequence is that of Aquaporin-11 from Homo sapiens (Human).